The sequence spans 154 residues: 6,7-dimethyl-8-ribityllumazine synthase (154 aa).

Residues Phe-15, 47-49 (TFD), and 71-73 (AVI) contribute to the 5-amino-6-(D-ribitylamino)uracil site. 76 to 77 (ET) lines the (2S)-2-hydroxy-3-oxobutyl phosphate pocket. His-79 functions as the Proton donor in the catalytic mechanism. Position 104 (Leu-104) interacts with 5-amino-6-(D-ribitylamino)uracil. Arg-119 contacts (2S)-2-hydroxy-3-oxobutyl phosphate.

This sequence belongs to the DMRL synthase family.

It catalyses the reaction (2S)-2-hydroxy-3-oxobutyl phosphate + 5-amino-6-(D-ribitylamino)uracil = 6,7-dimethyl-8-(1-D-ribityl)lumazine + phosphate + 2 H2O + H(+). It functions in the pathway cofactor biosynthesis; riboflavin biosynthesis; riboflavin from 2-hydroxy-3-oxobutyl phosphate and 5-amino-6-(D-ribitylamino)uracil: step 1/2. In terms of biological role, catalyzes the formation of 6,7-dimethyl-8-ribityllumazine by condensation of 5-amino-6-(D-ribitylamino)uracil with 3,4-dihydroxy-2-butanone 4-phosphate. This is the penultimate step in the biosynthesis of riboflavin. This is 6,7-dimethyl-8-ribityllumazine synthase from Saccharolobus solfataricus (strain ATCC 35092 / DSM 1617 / JCM 11322 / P2) (Sulfolobus solfataricus).